The following is an 802-amino-acid chain: Leucine--tRNA ligase (802 aa).

Residues 40–51 (PYPSGAGLHVGH) carry the 'HIGH' region motif. The 'KMSKS' region signature appears at 576-580 (KMSKS). An ATP-binding site is contributed by Lys579.

The protein belongs to the class-I aminoacyl-tRNA synthetase family.

It localises to the cytoplasm. The catalysed reaction is tRNA(Leu) + L-leucine + ATP = L-leucyl-tRNA(Leu) + AMP + diphosphate. The protein is Leucine--tRNA ligase of Bacillus mycoides (strain KBAB4) (Bacillus weihenstephanensis).